The sequence spans 103 residues: Large ribosomal subunit protein bL21 (103 aa).

The protein belongs to the bacterial ribosomal protein bL21 family. As to quaternary structure, part of the 50S ribosomal subunit. Contacts protein L20.

Its function is as follows. This protein binds to 23S rRNA in the presence of protein L20. This chain is Large ribosomal subunit protein bL21, found in Shigella sonnei (strain Ss046).